The chain runs to 289 residues: dTDP-rhamnosyl transferase RfbG (289 aa).

This sequence belongs to the glycosyltransferase 2 family.

It functions in the pathway bacterial outer membrane biogenesis; lipopolysaccharide biosynthesis. This chain is dTDP-rhamnosyl transferase RfbG (rfbG), found in Shigella flexneri.